The sequence spans 43 residues: Jararafibrase-3 (43 aa).

In terms of domain architecture, C-type lectin spans 10 to 43 (MNGLYYKIFDELKAWKDAEMFCRKYKPGWHLASF).

Belongs to the true venom lectin family. Monomer. As to expression, expressed by the venom gland.

Its subcellular location is the secreted. With respect to regulation, inhibited by 1,10-phenanthroline and EDTA. Functionally, may have both metalloproteinase and lectin activities. Induces local hemorrhage in the skin of rats. Degrades type-IV collagen, gelatin, laminin and fibronectin. Has hemagglutinating activity on red blood cells. In Bothrops jararaca (Jararaca), this protein is Jararafibrase-3.